The sequence spans 318 residues: Methionyl-tRNA formyltransferase (318 aa).

Residue 112 to 115 coordinates (6S)-5,6,7,8-tetrahydrofolate; sequence SILP.

This sequence belongs to the Fmt family.

It carries out the reaction L-methionyl-tRNA(fMet) + (6R)-10-formyltetrahydrofolate = N-formyl-L-methionyl-tRNA(fMet) + (6S)-5,6,7,8-tetrahydrofolate + H(+). Its function is as follows. Attaches a formyl group to the free amino group of methionyl-tRNA(fMet). The formyl group appears to play a dual role in the initiator identity of N-formylmethionyl-tRNA by promoting its recognition by IF2 and preventing the misappropriation of this tRNA by the elongation apparatus. The sequence is that of Methionyl-tRNA formyltransferase from Shewanella oneidensis (strain ATCC 700550 / JCM 31522 / CIP 106686 / LMG 19005 / NCIMB 14063 / MR-1).